The primary structure comprises 165 residues: MAEKQAGLVGEPDPEGSSPGTSESWNYDSNCVFCRVAAGQEPKTELFHCENEDLVCFKDIKPAALYHYLVVPKKHIGSCKDLNKDHIEMVESMVAAGKTMLERNNFTDFTDVRMGFHVPPFCSISHLHLHVIAPVKEFGFLSKLVYRQDSYWFVTVDYLLEKLRK.

A disordered region spans residues 1-23; it reads MAEKQAGLVGEPDPEGSSPGTSE. Ala-2 carries the post-translational modification N-acetylalanine. Residues 32-143 form the HIT domain; the sequence is VFCRVAAGQE…PVKEFGFLSK (112 aa). Residues 59 to 60 and 128 to 130 contribute to the AMP site; these read DI and HLH. The short motif at 126-130 is the Histidine triad motif element; sequence HLHLH. The active-site Tele-AMP-histidine intermediate is His-128.

The protein belongs to the HINT family. Forms dimers to octamers and even larger oligomer. Interacts with CALM1.

The protein localises to the cytoplasm. It is found in the nucleus. It carries out the reaction adenosine 5'-phosphoramidate + H2O = AMP + NH4(+). Functionally, exhibits adenosine 5'-monophosphoramidase activity, hydrolyzing purine nucleotide phosphoramidates with a single phosphate group such as adenosine 5'monophosphoramidate (AMP-NH2) to yield AMP and NH2. Hydrolyzes lysyl-AMP (AMP-N-epsilon-(N-alpha-acetyl lysine methyl ester)) generated by lysine tRNA ligase. The sequence is that of Adenosine 5'-monophosphoramidase HINT3 (Hint3) from Mus musculus (Mouse).